Here is a 208-residue protein sequence, read N- to C-terminus: Probable DNA-3-methyladenine glycosylase (208 aa).

This sequence belongs to the DNA glycosylase MPG family.

It localises to the nucleus. The catalysed reaction is Hydrolysis of alkylated DNA, releasing 3-methyladenine, 3-methylguanine, 7-methylguanine and 7-methyladenine.. Functionally, hydrolysis of the deoxyribose N-glycosidic bond to excise 3-methyladenine, and 7-methylguanine from the damaged DNA polymer formed by alkylation lesions. This chain is Probable DNA-3-methyladenine glycosylase, found in Encephalitozoon cuniculi (strain GB-M1) (Microsporidian parasite).